The following is a 260-amino-acid chain: Putative hydro-lyase Bmul_5125/BMULJ_03391 (260 aa).

The protein belongs to the D-glutamate cyclase family.

The sequence is that of Putative hydro-lyase Bmul_5125/BMULJ_03391 from Burkholderia multivorans (strain ATCC 17616 / 249).